The primary structure comprises 213 residues: NAD(P)H-hydrate epimerase (213 aa).

The YjeF N-terminal domain occupies 8–210; that stretch reads MYNIEENGHA…KIGIPPEAEK (203 aa). 55 to 59 is a binding site for (6S)-NADPHX; that stretch reads NNGGD. The K(+) site is built by Asn-56 and Asp-122. (6S)-NADPHX-binding positions include 126 to 132, Tyr-137, and Asp-155; that span reads GTGITGE. K(+) is bound at residue Ser-158.

Belongs to the NnrE/AIBP family. It depends on K(+) as a cofactor.

It carries out the reaction (6R)-NADHX = (6S)-NADHX. The catalysed reaction is (6R)-NADPHX = (6S)-NADPHX. In terms of biological role, catalyzes the epimerization of the S- and R-forms of NAD(P)HX, a damaged form of NAD(P)H that is a result of enzymatic or heat-dependent hydration. This is a prerequisite for the S-specific NAD(P)H-hydrate dehydratase to allow the repair of both epimers of NAD(P)HX. This is NAD(P)H-hydrate epimerase from Cenarchaeum symbiosum (strain A).